We begin with the raw amino-acid sequence, 227 residues long: uncharacterized protein (227 aa).

The Response regulatory domain occupies 2-115 (KILMIEDNVS…TLVARIKAVI (114 aa)). 4-aspartylphosphate is present on Asp-51. A DNA-binding region (ompR/PhoB-type) is located at residues 128–226 (EDMIETECFT…VWGVGYKFDE (99 aa)).

Phosphorylated by YclK.

The protein resides in the cytoplasm. Could be member of the two-component regulatory system YclK/YclJ. This is an uncharacterized protein from Bacillus subtilis (strain 168).